Consider the following 45-residue polypeptide: C-phycocyanin beta subunit (45 aa).

It belongs to the phycobiliprotein family. Heterodimer of an alpha and a beta subunit. The hererodimer further assembles into trimers and the trimers into hexamers. In terms of processing, contains two covalently linked bilin chromophores.

It is found in the cellular thylakoid membrane. Functionally, light-harvesting photosynthetic bile pigment-protein from the phycobiliprotein complex (phycobilisome, PBS). Phycocyanin is the major phycobiliprotein in the PBS rod. The sequence is that of C-phycocyanin beta subunit (cpcB) from Limnospira fusiformis (Arthrospira fusiformis).